The sequence spans 101 residues: NAD(P)H-quinone oxidoreductase subunit 4L, chloroplastic (101 aa).

The next 3 membrane-spanning stretches (helical) occupy residues 2-22 (MLEH…YGLI), 32-52 (MCLE…SDLF), and 61-81 (IFSI…PAIV).

Belongs to the complex I subunit 4L family. NDH is composed of at least 16 different subunits, 5 of which are encoded in the nucleus.

The protein resides in the plastid. Its subcellular location is the chloroplast thylakoid membrane. The catalysed reaction is a plastoquinone + NADH + (n+1) H(+)(in) = a plastoquinol + NAD(+) + n H(+)(out). It catalyses the reaction a plastoquinone + NADPH + (n+1) H(+)(in) = a plastoquinol + NADP(+) + n H(+)(out). Its function is as follows. NDH shuttles electrons from NAD(P)H:plastoquinone, via FMN and iron-sulfur (Fe-S) centers, to quinones in the photosynthetic chain and possibly in a chloroplast respiratory chain. The immediate electron acceptor for the enzyme in this species is believed to be plastoquinone. Couples the redox reaction to proton translocation, and thus conserves the redox energy in a proton gradient. The chain is NAD(P)H-quinone oxidoreductase subunit 4L, chloroplastic from Ceratophyllum demersum (Rigid hornwort).